The sequence spans 352 residues: Pheromone-regulated membrane protein 6 (352 aa).

The Extracellular portion of the chain corresponds to 1-36 (MESSLQKLKFQDIDINLIPTAKWTTKLQYILYTWCQ). Residues 37 to 57 (SILHVAMFFSDIYTCIKLLAF) form a helical membrane-spanning segment. The Cytoplasmic portion of the chain corresponds to 58–76 (NTWSNNIIQPFLEFRISKW). The chain crosses the membrane as a helical span at residues 77–97 (LFSGCILCSSLILIWELVIGL). The Extracellular segment spans residues 98-227 (RVYRKKEITS…VILSFMLFSF (130 aa)). Residues 228-248 (IIWVILISKLILSIIIFIIFI) form a helical membrane-spanning segment. Topologically, residues 249–352 (RPRFLSSKRK…FPQKYKHKYI (104 aa)) are cytoplasmic.

This sequence belongs to the KCH1 low affinity K(+) transporter family.

Its subcellular location is the cell membrane. The protein localises to the bud tip. The protein resides in the vacuole lumen. The catalysed reaction is K(+)(in) = K(+)(out). In terms of biological role, low affinity potassium transporter that, with KCH1, participates in high-affinity Ca(2+) influx system (HACS) activation during the response to mating pheromone. Directly promotes K(+) influx and HACS may electrochemically respond to this K(+) influx. KCH1 and PRM6/KCH2 act at the apex of the calcium signaling pathway that is used for survival during prolonged exposures to mating pheromones. This Saccharomyces cerevisiae (strain ATCC 204508 / S288c) (Baker's yeast) protein is Pheromone-regulated membrane protein 6.